We begin with the raw amino-acid sequence, 347 residues long: NADH-ubiquinone oxidoreductase chain 2 (347 aa).

10 helical membrane-spanning segments follow: residues 3–23 (PPIL…VLTS), 25–45 (HWLL…PILM), 59–79 (YFLT…INLL), 93–115 (MAST…HFWV), 149–169 (INTN…GWGG), 178–198 (ILAY…TYNP), 200–220 (VMIL…MLFI), 242–262 (SFIL…GFIP), 274–294 (EMII…YFYM), and 323–343 (MALL…TPMM).

This sequence belongs to the complex I subunit 2 family. As to quaternary structure, core subunit of respiratory chain NADH dehydrogenase (Complex I) which is composed of 45 different subunits. Interacts with TMEM242.

The protein resides in the mitochondrion inner membrane. It catalyses the reaction a ubiquinone + NADH + 5 H(+)(in) = a ubiquinol + NAD(+) + 4 H(+)(out). Its function is as follows. Core subunit of the mitochondrial membrane respiratory chain NADH dehydrogenase (Complex I) which catalyzes electron transfer from NADH through the respiratory chain, using ubiquinone as an electron acceptor. Essential for the catalytic activity and assembly of complex I. This Nandinia binotata (African palm civet) protein is NADH-ubiquinone oxidoreductase chain 2.